A 256-amino-acid polypeptide reads, in one-letter code: tRNA (guanine-N(1)-)-methyltransferase (256 aa).

S-adenosyl-L-methionine contacts are provided by residues Gly119 and Ile139–Val144.

The protein belongs to the RNA methyltransferase TrmD family. Homodimer.

Its subcellular location is the cytoplasm. It catalyses the reaction guanosine(37) in tRNA + S-adenosyl-L-methionine = N(1)-methylguanosine(37) in tRNA + S-adenosyl-L-homocysteine + H(+). Its function is as follows. Specifically methylates guanosine-37 in various tRNAs. The polypeptide is tRNA (guanine-N(1)-)-methyltransferase (Nitrosospira multiformis (strain ATCC 25196 / NCIMB 11849 / C 71)).